Consider the following 155-residue polypeptide: Microsomal glutathione S-transferase 1 (155 aa).

Residues 3-9 (DLRQLMD) are Lumenal-facing. The chain crosses the membrane as a helical span at residues 10-33 (NEVLMAFTSYATIILTKMMFMSSA). The Cytoplasmic portion of the chain corresponds to 34–62 (TAFQRITNKVFANPEDCAGFGKGENAKKF). Arg-38 contacts glutathione. N6-acetyllysine occurs at positions 42, 55, and 60. The helical transmembrane segment at 63–96 (VRTDEKVERVRRAHLNDLENIVPFLGIGLLYSLS) threads the bilayer. Residues Arg-73, Arg-74, His-76, and Glu-81 each coordinate glutathione. The Lumenal portion of the chain corresponds to 97–99 (GPD). Residues 100-123 (LSTALMHFRIFVGARIYHTIAYLT) form a helical membrane-spanning segment. Tyr-121 provides a ligand contact to glutathione. The Cytoplasmic portion of the chain corresponds to 124–128 (PLPQP). Residues 129–148 (NRGLAFFVGYGVTLSMAYRL) form a helical membrane-spanning segment. At 149-155 (LRSRLYL) the chain is on the lumenal side.

It belongs to the MAPEG family. As to quaternary structure, homotrimer; The trimer binds only one molecule of glutathione. Post-translationally, acetylation of Lys-42 and Lys-55 is observed in liver mitochondria from fasted mice but not from fed mice. Expressed in the testes (at protein level).

Its subcellular location is the endoplasmic reticulum membrane. It localises to the mitochondrion outer membrane. The catalysed reaction is RX + glutathione = an S-substituted glutathione + a halide anion + H(+). In terms of biological role, conjugation of reduced glutathione to a wide number of exogenous and endogenous hydrophobic electrophiles. The polypeptide is Microsomal glutathione S-transferase 1 (Mgst1) (Mus musculus (Mouse)).